Reading from the N-terminus, the 293-residue chain is Acetyl-coenzyme A carboxylase carboxyl transferase subunit beta (293 aa).

The CoA carboxyltransferase N-terminal domain maps to 29-293 (LWVKCSECSQ…GVKELAEANT (265 aa)). The Zn(2+) site is built by Cys33, Cys36, Cys52, and Cys55. The C4-type zinc finger occupies 33–55 (CSECSQVAYRKDLISNFNVCSNC).

This sequence belongs to the AccD/PCCB family. As to quaternary structure, acetyl-CoA carboxylase is a heterohexamer composed of biotin carboxyl carrier protein (AccB), biotin carboxylase (AccC) and two subunits each of ACCase subunit alpha (AccA) and ACCase subunit beta (AccD). The cofactor is Zn(2+).

The protein localises to the cytoplasm. The enzyme catalyses N(6)-carboxybiotinyl-L-lysyl-[protein] + acetyl-CoA = N(6)-biotinyl-L-lysyl-[protein] + malonyl-CoA. It functions in the pathway lipid metabolism; malonyl-CoA biosynthesis; malonyl-CoA from acetyl-CoA: step 1/1. Its function is as follows. Component of the acetyl coenzyme A carboxylase (ACC) complex. Biotin carboxylase (BC) catalyzes the carboxylation of biotin on its carrier protein (BCCP) and then the CO(2) group is transferred by the transcarboxylase to acetyl-CoA to form malonyl-CoA. In Prochlorococcus marinus (strain MIT 9301), this protein is Acetyl-coenzyme A carboxylase carboxyl transferase subunit beta.